A 387-amino-acid chain; its full sequence is Patatin-13 (387 aa).

The signal sequence occupies residues 1–23 (MATTKSVLVLIFMILATTSSTFA). The 199-residue stretch at 32–230 (LSVDGGGIKG…TVADPALLSV (199 aa)) folds into the PNPLA domain. The short motif at 36-41 (GGGIKG) is the GXGXXG element. Positions 75–79 (GTSTG) match the GXSXG motif. The active-site Nucleophile is the serine 77. N-linked (GlcNAc...) asparagine glycans are attached at residues asparagine 115 and asparagine 203. Catalysis depends on aspartate 216, which acts as the Proton acceptor. The DGA/G signature appears at 216-218 (DGA). Positions 361–385 (ETYEEALKRFAKLLSDRKKLRANKA) form a coiled coil.

The protein belongs to the patatin family. In terms of tissue distribution, tuber.

It localises to the vacuole. Probable lipolytic acyl hydrolase (LAH), an activity which is thought to be involved in the response of tubers to pathogens. This chain is Patatin-13, found in Solanum tuberosum (Potato).